The primary structure comprises 377 residues: tRNA-specific 2-thiouridylase MnmA (377 aa).

ATP-binding positions include 8–15 (GMSGGVDS) and M34. The interaction with target base in tRNA stretch occupies residues 94 to 96 (NPD). The active-site Nucleophile is C99. C99 and C201 are oxidised to a cystine. ATP is bound at residue G123. Positions 151–153 (KDQ) are interaction with tRNA. Residue C201 is the Cysteine persulfide intermediate of the active site. The tract at residues 315 to 316 (RY) is interaction with tRNA.

This sequence belongs to the MnmA/TRMU family.

Its subcellular location is the cytoplasm. The enzyme catalyses S-sulfanyl-L-cysteinyl-[protein] + uridine(34) in tRNA + AH2 + ATP = 2-thiouridine(34) in tRNA + L-cysteinyl-[protein] + A + AMP + diphosphate + H(+). Its function is as follows. Catalyzes the 2-thiolation of uridine at the wobble position (U34) of tRNA, leading to the formation of s(2)U34. The chain is tRNA-specific 2-thiouridylase MnmA from Acinetobacter baumannii (strain ACICU).